The primary structure comprises 218 residues: Epoxyqueuosine reductase QueH (218 aa).

Residues cysteine 22, cysteine 23, cysteine 101, and cysteine 104 each contribute to the [4Fe-4S] cluster site. Cysteines 184 and 186 form a disulfide.

It belongs to the QueH family.

The enzyme catalyses epoxyqueuosine(34) in tRNA + AH2 = queuosine(34) in tRNA + A + H2O. It functions in the pathway tRNA modification; tRNA-queuosine biosynthesis. Functionally, catalyzes the conversion of epoxyqueuosine (oQ) to queuosine (Q), which is a hypermodified base found in the wobble positions of tRNA(Asp), tRNA(Asn), tRNA(His) and tRNA(Tyr). The chain is Epoxyqueuosine reductase QueH from Acinetobacter baylyi (strain ATCC 33305 / BD413 / ADP1).